The sequence spans 111 residues: Kalata-B7 (111 aa).

Residues 1–28 (MAKFTNCLALCLLLAAVVGAFGVELSEA) form the signal peptide. The propeptide occupies 29-75 (DKSAVVNEIAEKMALQEMLDGVDKLFLRKMKSSETTLTMFLKEMQLK). Positions 76-104 (GLPVCGETCTLGTCYTQGCTCSWPICKRN) form a cross-link, cyclopeptide (Gly-Asn). Disulfide bonds link Cys-80–Cys-94, Cys-84–Cys-96, and Cys-89–Cys-101. A propeptide spanning residues 105 to 111 (GLPDVAA) is cleaved from the precursor.

In terms of processing, kalata-B7 is a cyclic peptide.

In terms of biological role, probably participates in a plant defense mechanism. Has hemolytic activity. The chain is Kalata-B7 (OAK3) from Oldenlandia affinis.